Consider the following 301-residue polypeptide: tRNA-cytidine(32) 2-sulfurtransferase (301 aa).

The PP-loop motif motif lies at 55-60; sequence SGGKDS. [4Fe-4S] cluster is bound by residues Cys-130, Cys-133, and Cys-221.

It belongs to the TtcA family. In terms of assembly, homodimer. Requires Mg(2+) as cofactor. [4Fe-4S] cluster serves as cofactor.

It localises to the cytoplasm. The enzyme catalyses cytidine(32) in tRNA + S-sulfanyl-L-cysteinyl-[cysteine desulfurase] + AH2 + ATP = 2-thiocytidine(32) in tRNA + L-cysteinyl-[cysteine desulfurase] + A + AMP + diphosphate + H(+). The protein operates within tRNA modification. Catalyzes the ATP-dependent 2-thiolation of cytidine in position 32 of tRNA, to form 2-thiocytidine (s(2)C32). The sulfur atoms are provided by the cysteine/cysteine desulfurase (IscS) system. The sequence is that of tRNA-cytidine(32) 2-sulfurtransferase from Acinetobacter baumannii (strain AB307-0294).